A 396-amino-acid chain; its full sequence is Phosphoglycerate kinase (396 aa).

Substrate is bound by residues aspartate 21–asparagine 23, arginine 36, histidine 59–arginine 62, arginine 118, and arginine 151. ATP contacts are provided by residues lysine 201, glutamate 323, and glycine 353–threonine 356.

This sequence belongs to the phosphoglycerate kinase family. As to quaternary structure, monomer.

It is found in the cytoplasm. It carries out the reaction (2R)-3-phosphoglycerate + ATP = (2R)-3-phospho-glyceroyl phosphate + ADP. Its pathway is carbohydrate degradation; glycolysis; pyruvate from D-glyceraldehyde 3-phosphate: step 2/5. In Brucella melitensis biotype 1 (strain ATCC 23456 / CCUG 17765 / NCTC 10094 / 16M), this protein is Phosphoglycerate kinase.